The primary structure comprises 843 residues: General transcription and DNA repair factor IIH helicase/translocase subunit XPB/SSL2 (843 aa).

Residues 1–85 (MTDVEGYQPK…TAADSSMNQM (85 aa)) form a disordered region. A compositionally biased stretch (acidic residues) spans 26–41 (SDEDSPATDAEIDENY). Positions 42 to 56 (DDNRETSEGRGERDT) are enriched in basic and acidic residues. Residues 64–74 (KKPRKKTKSSR) are compositionally biased toward basic residues. The short motif at 64 to 75 (KKPRKKTKSSRH) is the Nuclear localization signal element. The region spanning 373–535 (MFGNGRARSG…DLNFLIGPKL (163 aa)) is the Helicase ATP-binding domain. An ATP-binding site is contributed by 386 to 393 (LPCGAGKT). Residues 488-491 (DEVH) carry the DEAH box motif. The region spanning 589-743 (QACQFLIQYH…KVITHLHGME (155 aa)) is the Helicase C-terminal domain. A Phosphoserine modification is found at S752.

It belongs to the helicase family. RAD25/XPB subfamily. Component of the 7-subunit TFIIH core complex composed of XPB/SSL2, XPD/RAD3, SSL1, TFB1, TFB2, TFB4 and TFB5, which is active in NER. The core complex associates with the 3-subunit CTD-kinase module TFIIK composed of CCL1, KIN28 and TFB3 to form the 10-subunit holoenzyme (holo-TFIIH) active in transcription. An additionnal subunit, TFB6, plays a role in the dissociation of the SSL2 helicase from TFIIH after transcription initiation. Interacts directly with TFB6. Mg(2+) serves as cofactor.

It is found in the nucleus. The catalysed reaction is Couples ATP hydrolysis with the unwinding of duplex DNA by translocating in the 3'-5' direction.. It carries out the reaction ATP + H2O = ADP + phosphate + H(+). Functionally, ATP-dependent DNA translocase. Component of the general transcription and DNA repair factor IIH (TFIIH) core complex. When complexed to CDK-activating kinase (CAK), involved in RNA transcription by RNA polymerase II. May have 3'-5' helicase activity alone, the TFIIH core however has no 3'-5' helicase activity. Also involved in transcription-coupled nucleotide excision repair (NER) of damaged DNA. In NER, TFIIH acts by opening DNA around the lesion to allow the excision of the damaged oligonucleotide and its replacement by a new DNA fragment. The ATPase activity of XPB/SSL2, but not its helicase activity, is required for DNA opening. In transcription, TFIIH has an essential role in transcription initiation. When the pre-initiation complex (PIC) has been established, TFIIH is required for promoter opening and promoter escape. The ATP-dependent helicase activity of XPB/SSL2 is required for promoter opening and promoter escape. XPB/SSL2 acts as a double-stranded DNA translocase, promoting DNA opening by tracking in a 5'-3' dirction along the nontemplate promoter strand, rotating and inserting DNA into the Pol II active site cleft, leading to DNA unwinding. A dsDNA-stimulated ATPase, dATP and ATP are equally good substrates. May also use this translocase mechanism during DNA repair rather than physically wedging open damaged DNA. The protein is General transcription and DNA repair factor IIH helicase/translocase subunit XPB/SSL2 of Saccharomyces cerevisiae (strain ATCC 204508 / S288c) (Baker's yeast).